Here is a 137-residue protein sequence, read N- to C-terminus: Large ribosomal subunit protein uL16 (137 aa).

The protein belongs to the universal ribosomal protein uL16 family. As to quaternary structure, part of the 50S ribosomal subunit.

Functionally, binds 23S rRNA and is also seen to make contacts with the A and possibly P site tRNAs. This is Large ribosomal subunit protein uL16 from Endomicrobium trichonymphae.